A 150-amino-acid polypeptide reads, in one-letter code: Transcriptional repressor NrdR (150 aa).

Residues 1–26 are disordered; that stretch reads MKCPFCGNSDSKVVDSRPDKGGSGIR. A zinc finger lies at 3-34; sequence CPFCGNSDSKVVDSRPDKGGSGIRRRRECEQC. Residues 49 to 139 form the ATP-cone domain; it reads PLVLKKDGRR…VYRSFRDINE (91 aa).

This sequence belongs to the NrdR family. Zn(2+) is required as a cofactor.

In terms of biological role, negatively regulates transcription of bacterial ribonucleotide reductase nrd genes and operons by binding to NrdR-boxes. This is Transcriptional repressor NrdR from Pelobacter propionicus (strain DSM 2379 / NBRC 103807 / OttBd1).